We begin with the raw amino-acid sequence, 362 residues long: Probable S-adenosylmethionine-dependent methyltransferase At5g37970 (362 aa).

Positions 19, 66, 71, 107, 136, and 137 each coordinate S-adenosyl-L-homocysteine. Asn175, Glu261, and Phe263 together coordinate Mg(2+).

This sequence belongs to the methyltransferase superfamily. Type-7 methyltransferase family. In terms of assembly, homodimer. Mg(2+) is required as a cofactor.

The protein is Probable S-adenosylmethionine-dependent methyltransferase At5g37970 of Arabidopsis thaliana (Mouse-ear cress).